Reading from the N-terminus, the 375-residue chain is Succinyl-diaminopimelate desuccinylase (375 aa).

Zn(2+) is bound at residue histidine 66. Aspartate 68 is an active-site residue. Aspartate 99 lines the Zn(2+) pocket. Glutamate 133 functions as the Proton acceptor in the catalytic mechanism. Residues glutamate 134, glutamate 162, and histidine 348 each coordinate Zn(2+).

Belongs to the peptidase M20A family. DapE subfamily. Homodimer. It depends on Zn(2+) as a cofactor. The cofactor is Co(2+).

The enzyme catalyses N-succinyl-(2S,6S)-2,6-diaminopimelate + H2O = (2S,6S)-2,6-diaminopimelate + succinate. It functions in the pathway amino-acid biosynthesis; L-lysine biosynthesis via DAP pathway; LL-2,6-diaminopimelate from (S)-tetrahydrodipicolinate (succinylase route): step 3/3. Its function is as follows. Catalyzes the hydrolysis of N-succinyl-L,L-diaminopimelic acid (SDAP), forming succinate and LL-2,6-diaminopimelate (DAP), an intermediate involved in the bacterial biosynthesis of lysine and meso-diaminopimelic acid, an essential component of bacterial cell walls. The polypeptide is Succinyl-diaminopimelate desuccinylase (Shigella boydii serotype 18 (strain CDC 3083-94 / BS512)).